We begin with the raw amino-acid sequence, 429 residues long: Probable E3 ubiquitin-protein ligase makorin-1 (429 aa).

C3H1-type zinc fingers lie at residues 18 to 45 (WTKH…HDLT), 48 to 75 (KPAA…HCKP), and 153 to 180 (ELRK…HGDV). Positions 181–208 (CDMCGLQVLHPTDSSQRSEHTKACIEAH) are makorin-type Cys-His. The RING-type zinc-finger motif lies at 226 to 280 (CGVCMEVVFEKANPSERRFGILSNCSHCYCLKCIRKWRSAKQFESKIIKSCPECR). A C3H1-type 4 zinc finger spans residues 309-338 (GMGRKPCRYFDEGRGICPFGANCFYKHAFP). The disordered stretch occupies residues 343 to 362 (EEAQPQRRQTGSSSRNRNSR). A compositionally biased stretch (low complexity) spans 348-358 (QRRQTGSSSRN).

It carries out the reaction S-ubiquitinyl-[E2 ubiquitin-conjugating enzyme]-L-cysteine + [acceptor protein]-L-lysine = [E2 ubiquitin-conjugating enzyme]-L-cysteine + N(6)-ubiquitinyl-[acceptor protein]-L-lysine.. The protein operates within protein modification; protein ubiquitination. Functionally, E3 ubiquitin ligase catalyzing the covalent attachment of ubiquitin moieties onto substrate proteins. The chain is Probable E3 ubiquitin-protein ligase makorin-1 from Takifugu rubripes (Japanese pufferfish).